The following is an 89-amino-acid chain: Small ribosomal subunit protein uS15 (89 aa).

Belongs to the universal ribosomal protein uS15 family. As to quaternary structure, part of the 30S ribosomal subunit. Forms a bridge to the 50S subunit in the 70S ribosome, contacting the 23S rRNA.

One of the primary rRNA binding proteins, it binds directly to 16S rRNA where it helps nucleate assembly of the platform of the 30S subunit by binding and bridging several RNA helices of the 16S rRNA. Functionally, forms an intersubunit bridge (bridge B4) with the 23S rRNA of the 50S subunit in the ribosome. The polypeptide is Small ribosomal subunit protein uS15 (Methylorubrum extorquens (strain CM4 / NCIMB 13688) (Methylobacterium extorquens)).